A 124-amino-acid polypeptide reads, in one-letter code: Large ribosomal subunit protein bL12 (124 aa).

The protein belongs to the bacterial ribosomal protein bL12 family. In terms of assembly, homodimer. Part of the ribosomal stalk of the 50S ribosomal subunit. Forms a multimeric L10(L12)X complex, where L10 forms an elongated spine to which 2 to 4 L12 dimers bind in a sequential fashion. Binds GTP-bound translation factors.

In terms of biological role, forms part of the ribosomal stalk which helps the ribosome interact with GTP-bound translation factors. Is thus essential for accurate translation. This chain is Large ribosomal subunit protein bL12, found in Nautilia profundicola (strain ATCC BAA-1463 / DSM 18972 / AmH).